Here is a 161-residue protein sequence, read N- to C-terminus: Phosphopantetheine adenylyltransferase (161 aa).

Threonine 10 provides a ligand contact to substrate. Residues 10–11 and histidine 18 contribute to the ATP site; that span reads TF. Lysine 42, methionine 74, and arginine 88 together coordinate substrate. Residues 89–91, glutamate 99, and 124–130 each bind ATP; these read GLR and WSFISSS.

Belongs to the bacterial CoaD family. Homohexamer. Requires Mg(2+) as cofactor.

It localises to the cytoplasm. The enzyme catalyses (R)-4'-phosphopantetheine + ATP + H(+) = 3'-dephospho-CoA + diphosphate. It functions in the pathway cofactor biosynthesis; coenzyme A biosynthesis; CoA from (R)-pantothenate: step 4/5. Reversibly transfers an adenylyl group from ATP to 4'-phosphopantetheine, yielding dephospho-CoA (dPCoA) and pyrophosphate. The sequence is that of Phosphopantetheine adenylyltransferase from Serratia proteamaculans (strain 568).